The sequence spans 342 residues: Foldase protein PrsA (342 aa).

Residues 1–22 (MVSVKKIVASALVGVLMFSAVG) form the signal peptide. A lipid anchor (N-palmitoyl cysteine) is attached at cysteine 23. Cysteine 23 carries S-diacylglycerol cysteine lipidation. Residues 189–284 (DSGVLTKHLL…FGYHIIQAGA (96 aa)) enclose the PpiC domain.

Belongs to the PrsA family.

Its subcellular location is the cell membrane. The enzyme catalyses [protein]-peptidylproline (omega=180) = [protein]-peptidylproline (omega=0). Its function is as follows. Plays a major role in protein secretion by helping the post-translocational extracellular folding of several secreted proteins. This chain is Foldase protein PrsA, found in Clostridium perfringens (strain ATCC 13124 / DSM 756 / JCM 1290 / NCIMB 6125 / NCTC 8237 / Type A).